The following is a 475-amino-acid chain: Ribulose bisphosphate carboxylase large chain (475 aa).

Residues 1–2 (MS) constitute a propeptide that is removed on maturation. Pro-3 is subject to N-acetylproline. Lys-14 is subject to N6,N6,N6-trimethyllysine. Substrate-binding residues include Asn-123 and Thr-173. The active-site Proton acceptor is Lys-175. Lys-177 serves as a coordination point for substrate. Mg(2+) is bound by residues Lys-201, Asp-203, and Glu-204. Lys-201 is subject to N6-carboxylysine. The Proton acceptor role is filled by His-294. Arg-295, His-327, and Ser-379 together coordinate substrate.

It belongs to the RuBisCO large chain family. Type I subfamily. Heterohexadecamer of 8 large chains and 8 small chains; disulfide-linked. The disulfide link is formed within the large subunit homodimers. Mg(2+) serves as cofactor. The disulfide bond which can form in the large chain dimeric partners within the hexadecamer appears to be associated with oxidative stress and protein turnover.

It localises to the plastid. Its subcellular location is the chloroplast. It carries out the reaction 2 (2R)-3-phosphoglycerate + 2 H(+) = D-ribulose 1,5-bisphosphate + CO2 + H2O. It catalyses the reaction D-ribulose 1,5-bisphosphate + O2 = 2-phosphoglycolate + (2R)-3-phosphoglycerate + 2 H(+). Functionally, ruBisCO catalyzes two reactions: the carboxylation of D-ribulose 1,5-bisphosphate, the primary event in carbon dioxide fixation, as well as the oxidative fragmentation of the pentose substrate in the photorespiration process. Both reactions occur simultaneously and in competition at the same active site. The polypeptide is Ribulose bisphosphate carboxylase large chain (Viscum album (European mistletoe)).